Here is a 361-residue protein sequence, read N- to C-terminus: Phospho-N-acetylmuramoyl-pentapeptide-transferase (361 aa).

10 helical membrane-spanning segments follow: residues 26–46, 73–93, 98–118, 139–159, 168–188, 200–220, 237–257, 264–284, 289–309, and 339–359; these read SILAALTALFLSLWIGPVLIQ, TMGGSLILMTVTLSVLLWGDL, VWLVLVVMLAFGAIGWYDDWI, IFGLAAGLFLYFTADVPAAVT, IALPLTSISFVAITYFWIVGF, GLAIMPTVLVACALGVFAYAS, AGDLIIICAAIAGAGLGFLWF, VFMGDIGALALGAVLGTIAVI, LVLVVMGGVFVIETLSVIIQV, and VIVRFWIISVVLVLVGLATLK.

It belongs to the glycosyltransferase 4 family. MraY subfamily. Requires Mg(2+) as cofactor.

It is found in the cell inner membrane. The enzyme catalyses UDP-N-acetyl-alpha-D-muramoyl-L-alanyl-gamma-D-glutamyl-meso-2,6-diaminopimeloyl-D-alanyl-D-alanine + di-trans,octa-cis-undecaprenyl phosphate = di-trans,octa-cis-undecaprenyl diphospho-N-acetyl-alpha-D-muramoyl-L-alanyl-D-glutamyl-meso-2,6-diaminopimeloyl-D-alanyl-D-alanine + UMP. The protein operates within cell wall biogenesis; peptidoglycan biosynthesis. Its function is as follows. Catalyzes the initial step of the lipid cycle reactions in the biosynthesis of the cell wall peptidoglycan: transfers peptidoglycan precursor phospho-MurNAc-pentapeptide from UDP-MurNAc-pentapeptide onto the lipid carrier undecaprenyl phosphate, yielding undecaprenyl-pyrophosphoryl-MurNAc-pentapeptide, known as lipid I. The protein is Phospho-N-acetylmuramoyl-pentapeptide-transferase of Xylella fastidiosa (strain M12).